The following is a 190-amino-acid chain: Female-specific histamine-binding protein 1 (190 aa).

An N-terminal signal peptide occupies residues 1–18; the sequence is MKLLLSLAFVLALSQVKA. Residues Tyr54, Asp57, Trp60, Glu100, Tyr118, Glu153, and Trp155 each contribute to the histamine site. Disulfide bonds link Cys66–Cys187 and Cys137–Cys166.

Belongs to the calycin superfamily. Histamine-binding salivary protein family. Monomer. As to expression, expressed in salivary glands.

It is found in the secreted. Its function is as follows. Salivary tick protein that acts by scavenging histamine at the wound site, outcompeting histamine receptors for histamine, thereby overcoming host inflammatory responses. Binds histamine with a high-affinity (Kd=18 nM). Contains two binding histamine sites (H and L), that appear to bind histamine with differing affinities (high and low). In vivo, when tested on a mouse asthma model, shows a profound inhibitory effect on allergic asthma. Aerosol administration of this protein prevents airway hyperreactivity and abrogates peribronchial inflammation, eosinophil recruitment, mucus hypersecretion, and interleukins (IL-4 and IL-5) secretion. In addition, when tested on a mouse model of acute respiratory distress syndrome (ARDS), it attenuates endotoxin-induced acute lung injury. The polypeptide is Female-specific histamine-binding protein 1 (Rhipicephalus appendiculatus (Brown ear tick)).